Consider the following 563-residue polypeptide: Methylcrotonoyl-CoA carboxylase beta chain, mitochondrial (563 aa).

The N-terminal 22 residues, 1 to 22 (MWGALRSALRPCCRAAVPPQRA), are a transit peptide targeting the mitochondrion. Positions 49 to 306 (MKALVSQLHE…QKKMDVTIEP (258 aa)) constitute a CoA carboxyltransferase N-terminal domain. The tract at residues 49 to 555 (MKALVSQLHE…SAALNAPIQR (507 aa)) is carboxyltransferase. Lys-70 is subject to N6-acetyllysine; alternate. An N6-succinyllysine; alternate modification is found at Lys-70. Lys-141 carries the post-translational modification N6-succinyllysine. Positions 309–555 (EPLFPADELY…SAALNAPIQR (247 aa)) constitute a CoA carboxyltransferase C-terminal domain. Positions 343-372 (RFNEFKALYGDTLVTGFARIFGYPVGIIGN) are acyl-CoA binding. Lys-433 bears the N6-succinyllysine mark. Lys-495 is subject to N6-acetyllysine; alternate. Lys-495 bears the N6-succinyllysine; alternate mark. N6-acetyllysine is present on Lys-511.

It belongs to the AccD/PCCB family. Probably a dodecamer composed of six biotin-containing alpha subunits (MCCC1) and six beta (MCCC2) subunits.

The protein resides in the mitochondrion matrix. The catalysed reaction is 3-methylbut-2-enoyl-CoA + hydrogencarbonate + ATP = 3-methyl-(2E)-glutaconyl-CoA + ADP + phosphate + H(+). It participates in amino-acid degradation; L-leucine degradation; (S)-3-hydroxy-3-methylglutaryl-CoA from 3-isovaleryl-CoA: step 2/3. Functionally, carboxyltransferase subunit of the 3-methylcrotonyl-CoA carboxylase, an enzyme that catalyzes the conversion of 3-methylcrotonyl-CoA to 3-methylglutaconyl-CoA, a critical step for leucine and isovaleric acid catabolism. This Mus musculus (Mouse) protein is Methylcrotonoyl-CoA carboxylase beta chain, mitochondrial (Mccc2).